A 252-amino-acid polypeptide reads, in one-letter code: Ribosomal RNA small subunit methyltransferase J (252 aa).

S-adenosyl-L-methionine is bound by residues 101–102, 117–118, 153–154, and Asp171; these read RD, ER, and SS.

It belongs to the methyltransferase superfamily. RsmJ family.

The protein localises to the cytoplasm. The catalysed reaction is guanosine(1516) in 16S rRNA + S-adenosyl-L-methionine = N(2)-methylguanosine(1516) in 16S rRNA + S-adenosyl-L-homocysteine + H(+). Functionally, specifically methylates the guanosine in position 1516 of 16S rRNA. In Salmonella typhimurium (strain LT2 / SGSC1412 / ATCC 700720), this protein is Ribosomal RNA small subunit methyltransferase J.